The primary structure comprises 165 residues: Protein SprT (165 aa).

Residues 20 to 163 (EKLAQANLKL…RCVHCGEQLV (144 aa)) enclose the SprT-like domain. Histidine 78 lines the Zn(2+) pocket. Residue glutamate 79 is part of the active site. Histidine 82 is a Zn(2+) binding site.

Belongs to the SprT family. It depends on Zn(2+) as a cofactor.

The protein localises to the cytoplasm. The sequence is that of Protein SprT from Shigella sonnei (strain Ss046).